Reading from the N-terminus, the 949-residue chain is MAM domain-containing glycosylphosphatidylinositol anchor protein 2 (949 aa).

An N-terminal signal peptide occupies residues 1-25; it reads MDLVYGLVWLLTVLLEGISGQGVYA. Ig-like domains are found at residues 27-127 and 134-232; these read PTVR…IRVD and PVVT…KMVS. 2 disulfide bridges follow: Cys62-Cys110 and Cys159-Cys216. N-linked (GlcNAc...) asparagine glycans are attached at residues Asn92, Asn213, and Asn237. Ig-like domains are found at residues 242–328, 340–436, 442–533, and 540–627; these read PSIK…NIIV, PDPY…VNIS, PNLT…ALVQ, and PAVE…FLVT. 2 disulfides stabilise this stretch: Cys264–Cys310 and Cys359–Cys417. N-linked (GlcNAc...) asparagine glycosylation is found at Asn434, Asn443, Asn504, Asn610, and Asn703. Cystine bridges form between Cys465–Cys515 and Cys561–Cys611. A Fibronectin type-III domain is found at 638–738; it reads DTYNPVWQNR…TIRVIKYTGE (101 aa). The MAM domain occupies 739 to 914; sequence FHCGFEDGNI…VSIAEGECAK (176 aa). Asp924 is lipidated: GPI-anchor amidated aspartate. The propeptide at 925–949 is removed in mature form; it reads GAVGILVHIWLFPVIILISILSPRR.

Interacts (through the Ig-like domains) with NLGN2.

Its subcellular location is the cell membrane. Functionally, may be involved in cell-cell interactions. This Mus musculus (Mouse) protein is MAM domain-containing glycosylphosphatidylinositol anchor protein 2 (Mdga2).